The following is a 117-amino-acid chain: Large ribosomal subunit protein uL18 (117 aa).

Belongs to the universal ribosomal protein uL18 family. Part of the 50S ribosomal subunit; part of the 5S rRNA/L5/L18/L25 subcomplex. Contacts the 5S and 23S rRNAs.

Its function is as follows. This is one of the proteins that bind and probably mediate the attachment of the 5S RNA into the large ribosomal subunit, where it forms part of the central protuberance. The chain is Large ribosomal subunit protein uL18 from Thiobacillus denitrificans (strain ATCC 25259 / T1).